The following is a 171-amino-acid chain: MANPKNEAALAELKAQFAETDSIVLTEYRGLTVAQTTELRRALGDDVQYSVAKNTLVKIAAQEAGVEGLDDLLTGPTAVAFIKGEAVDTAKVLKKFGDDNKAFVVKGGYMDGNALTADQVKAIAELDNRETTLAKLAGAMKGNLAKAAGLFNAPASQVARLAAALQEKKDA.

Belongs to the universal ribosomal protein uL10 family. Part of the ribosomal stalk of the 50S ribosomal subunit. The N-terminus interacts with L11 and the large rRNA to form the base of the stalk. The C-terminus forms an elongated spine to which L12 dimers bind in a sequential fashion forming a multimeric L10(L12)X complex.

In terms of biological role, forms part of the ribosomal stalk, playing a central role in the interaction of the ribosome with GTP-bound translation factors. The sequence is that of Large ribosomal subunit protein uL10 from Corynebacterium efficiens (strain DSM 44549 / YS-314 / AJ 12310 / JCM 11189 / NBRC 100395).